The following is a 180-amino-acid chain: Large ribosomal subunit protein uL5 (180 aa).

The protein belongs to the universal ribosomal protein uL5 family. In terms of assembly, part of the 50S ribosomal subunit; part of the 5S rRNA/L5/L18/L25 subcomplex. Contacts the 5S rRNA and the P site tRNA. Forms a bridge to the 30S subunit in the 70S ribosome.

Functionally, this is one of the proteins that bind and probably mediate the attachment of the 5S RNA into the large ribosomal subunit, where it forms part of the central protuberance. In the 70S ribosome it contacts protein S13 of the 30S subunit (bridge B1b), connecting the 2 subunits; this bridge is implicated in subunit movement. Contacts the P site tRNA; the 5S rRNA and some of its associated proteins might help stabilize positioning of ribosome-bound tRNAs. The polypeptide is Large ribosomal subunit protein uL5 (Leuconostoc citreum (strain KM20)).